The primary structure comprises 402 residues: Protochlorophyllide reductase B, chloroplastic (402 aa).

Belongs to the short-chain dehydrogenases/reductases (SDR) family. POR subfamily.

It localises to the plastid. Its subcellular location is the chloroplast. It catalyses the reaction chlorophyllide a + NADP(+) = protochlorophyllide a + NADPH + H(+). The protein operates within porphyrin-containing compound metabolism; chlorophyll biosynthesis. Phototransformation of protochlorophyllide (Pchlide) to chlorophyllide (Chlide). The polypeptide is Protochlorophyllide reductase B, chloroplastic (PORB) (Oryza sativa subsp. japonica (Rice)).